Reading from the N-terminus, the 245-residue chain is 2,3-bisphosphoglycerate-dependent phosphoglycerate mutase (245 aa).

Substrate-binding positions include 8–15, 21–22, R60, 87–90, K98, 114–115, and 183–184; these read RHGQSLWN, TG, ERHY, RR, and GN. Residue H9 is the Tele-phosphohistidine intermediate of the active site. The Proton donor/acceptor role is filled by E87.

It belongs to the phosphoglycerate mutase family. BPG-dependent PGAM subfamily.

The enzyme catalyses (2R)-2-phosphoglycerate = (2R)-3-phosphoglycerate. Its pathway is carbohydrate degradation; glycolysis; pyruvate from D-glyceraldehyde 3-phosphate: step 3/5. Its function is as follows. Catalyzes the interconversion of 2-phosphoglycerate and 3-phosphoglycerate. The chain is 2,3-bisphosphoglycerate-dependent phosphoglycerate mutase from Bacillus cereus (strain B4264).